We begin with the raw amino-acid sequence, 255 residues long: Geranylgeranylglyceryl phosphate synthase (255 aa).

The Mg(2+) site is built by D34 and T64. Residues 182–188, 213–214, and 235–236 contribute to the sn-glycerol 1-phosphate site; these read YLEAGSG, GG, and GN.

This sequence belongs to the GGGP/HepGP synthase family. Group II subfamily. Requires Mg(2+) as cofactor.

It localises to the cytoplasm. It carries out the reaction sn-glycerol 1-phosphate + (2E,6E,10E)-geranylgeranyl diphosphate = sn-3-O-(geranylgeranyl)glycerol 1-phosphate + diphosphate. It functions in the pathway membrane lipid metabolism; glycerophospholipid metabolism. Functionally, prenyltransferase that catalyzes the transfer of the geranylgeranyl moiety of geranylgeranyl diphosphate (GGPP) to the C3 hydroxyl of sn-glycerol-1-phosphate (G1P). This reaction is the first ether-bond-formation step in the biosynthesis of archaeal membrane lipids. This is Geranylgeranylglyceryl phosphate synthase from Saccharolobus islandicus (strain M.16.27) (Sulfolobus islandicus).